The sequence spans 1036 residues: MEVVGDFEYSKRDLVGHGAFAVVFRGRHRQKTDWEVAIKSINKKNLSKSQILLGKEIKILKELQHENIVALYDVQELPNSVFLVMEYCNGGDLADYLQAKGTLSEDTIRVFLHQIAAAMRILHSKGIIHRDLKPQNILLSYANRRKSSVSGIRIKIADFGFARYLHSNMMAATLCGSPMYMAPEVIMSQHYDAKADLWSIGTVIYQCLVGKPPFQANSPQDLRMFYEKNRSLMPSIPRETSPYLANLLLGLLQRNQKDRMDFEAFFSHPFLEQGPVKKSCPVPVPMYSGSVSGSSCGSSPSCRFASPPSLPDMQHIQEENLSSPPLGPPNYLQVSKDSASTSSKNSSCDTDDFVLVPHNISSDHSCDMPVGTAGRRASNEFLVCGGQCQPTVSPHSETAPIPVPTQIRNYQRIEQNLTSTASSGTNVHGSPRSAVVRRSNTSPMGFLRPGSCSPVPADTAQTVGRRLSTGSSRPYSPSPLVGTIPEQFSQCCCGHPQGHDSRSRNSSGSPVPQAQSPQSLLSGARLQSAPTLTDIYQNKQKLRKQHSDPVCPSHTGAGYSYSPQPSRPGSLGTSPTKHLGSSPRSSDWFFKTPLPTIIGSPTKTTAPFKIPKTQASSNLLALVTRHGPAEEQSKDGNEPRECAHCLLVQGSERQRAEQQSKAVFGRSVSTGKLSDQQGKTPICRHQGSTDSLNTERPMDIAPAGACGGVLAPPAGTAASSKAVLFTVGSPPHSAAAPTCTHMFLRTRTTSVGPSNSGGSLCAMSGRVCVGSPPGPGFGSSPPGAEAAPSLRYVPYGASPPSLEGLITFEAPELPEETLMEREHTDTLRHLNVMLMFTECVLDLTAMRGGNPELCTSAVSLYQIQESVVVDQISQLSKDWGRVEQLVLYMKAAQLLAASLHLAKAQIKSGKLSPSTAVKQVVKNLNERYKFCITMCKKLTEKLNRFFSDKQRFIDEINSVTAEKLIYNCAVEMVQSAALDEMFQQTEDIVYRYHKAALLLEGLSRILQDPADIENVHKYKCSIERRLSALCHSTATV.

A Protein kinase domain is found at 9 to 271; it reads YSKRDLVGHG…FEAFFSHPFL (263 aa). ATP-binding positions include 15 to 23 and Lys-39; that span reads VGHGAFAVV. Catalysis depends on Asp-131, which acts as the Proton acceptor. 5 disordered regions span residues 319–348, 418–460, 491–522, 540–588, and 656–695; these read ENLS…NSSC, TSTA…ADTA, CCCG…SLLS, QKLR…SSDW, and AEQQ…LNTE. Residues 335–348 are compositionally biased toward low complexity; it reads SKDSASTSSKNSSC. Residues 418–428 show a composition bias toward polar residues; sequence TSTASSGTNVH. Phosphoserine is present on Ser-430. Positions 504-521 are enriched in polar residues; the sequence is RNSSGSPVPQAQSPQSLL. Positions 659–679 are enriched in polar residues; it reads QSKAVFGRSVSTGKLSDQQGK. Ser-771 and Ser-780 each carry phosphoserine. The interval 812 to 1036 is CTD-like region; sequence ELPEETLMER…SALCHSTATV (225 aa).

The protein belongs to the protein kinase superfamily. Ser/Thr protein kinase family. APG1/unc-51/ULK1 subfamily. As to quaternary structure, interacts with SYNGAP1. Component of a complex consisting of ATG13/KIAA0652, ULK1 and RB1CC1/FIP200. Interacts (via C-terminus) with ATG13/KIAA0652. Associates with the mammalian target of rapamycin complex 1 (mTORC1) through an interaction with RPTOR. Autophosphorylated. In response to nutrient limitation, probably phosphorylated and activated by AMPK, leading to activate autophagy.

The protein resides in the cytoplasmic vesicle membrane. The enzyme catalyses L-seryl-[protein] + ATP = O-phospho-L-seryl-[protein] + ADP + H(+). It carries out the reaction L-threonyl-[protein] + ATP = O-phospho-L-threonyl-[protein] + ADP + H(+). Serine/threonine-protein kinase involved in autophagy in response to starvation. Acts upstream of phosphatidylinositol 3-kinase PIK3C3 to regulate the formation of autophagophores, the precursors of autophagosomes. Part of regulatory feedback loops in autophagy: acts both as a downstream effector and a negative regulator of mammalian target of rapamycin complex 1 (mTORC1) via interaction with RPTOR. Activated via phosphorylation by AMPK, also acts as a negative regulator of AMPK through phosphorylation of the AMPK subunits PRKAA1, PRKAB2 and PRKAG1. May phosphorylate ATG13/KIAA0652, FRS2, FRS3 and RPTOR; however such data need additional evidences. Not involved in ammonia-induced autophagy or in autophagic response of cerebellar granule neurons (CGN) to low potassium concentration. Plays a role early in neuronal differentiation and is required for granule cell axon formation: may govern axon formation via Ras-like GTPase signaling and through regulation of the Rab5-mediated endocytic pathways within developing axons. The polypeptide is Serine/threonine-protein kinase ULK2 (ULK2) (Homo sapiens (Human)).